Reading from the N-terminus, the 64-residue chain is Large ribosomal subunit protein bL33 (64 aa).

It belongs to the bacterial ribosomal protein bL33 family.

The chain is Large ribosomal subunit protein bL33 from Synechococcus sp. (strain JA-3-3Ab) (Cyanobacteria bacterium Yellowstone A-Prime).